Consider the following 123-residue polypeptide: MTYQRLSLGRWGEDIAAGYLRRQGMKILDRNIRTPVGELDIVARHKRMLIFVEVKTRRGISHGYPQEAVGAAKQRQILRAAQWYLAERRLDRLQPRFDVIAVRRRGDEAEVEHFPGAFDVDGW.

This sequence belongs to the UPF0102 family.

This is UPF0102 protein Pcar_2217 from Syntrophotalea carbinolica (strain DSM 2380 / NBRC 103641 / GraBd1) (Pelobacter carbinolicus).